The following is a 128-amino-acid chain: uncharacterized protein (128 aa).

4 helical membrane passes run 5–25 (ILAL…YSMM), 27–47 (PVLV…PLFL), 60–80 (QLWW…FIGL), and 87–107 (SAVT…HFFF). In terms of domain architecture, EamA spans 9-110 (LIWSSSLIVG…FVGHFFFKTK (102 aa)).

The protein resides in the cell membrane. This is an uncharacterized protein from Haemophilus influenzae (strain ATCC 51907 / DSM 11121 / KW20 / Rd).